The following is a 174-amino-acid chain: 16S rRNA aminocarboxypropyltransferase (174 aa).

The S-adenosyl-L-methionine site is built by Thr26, Leu73, Leu97, and Ser116.

Belongs to the TDD superfamily. TSR3 family.

The protein resides in the cytoplasm. It catalyses the reaction an N(1)-methylpseudouridine in rRNA + S-adenosyl-L-methionine = N(1)-methyl-N(3)-[(3S)-3-amino-3-carboxypropyl]pseudouridine in rRNA + S-methyl-5'-thioadenosine + H(+). Its function is as follows. Aminocarboxypropyltransferase that catalyzes the aminocarboxypropyl transfer on pseudouridine corresponding to position 914 in M.jannaschii 16S rRNA. It constitutes the last step in biosynthesis of the hypermodified N1-methyl-N3-(3-amino-3-carboxypropyl) pseudouridine (m1acp3-Psi). In Methanosarcina acetivorans (strain ATCC 35395 / DSM 2834 / JCM 12185 / C2A), this protein is 16S rRNA aminocarboxypropyltransferase.